The primary structure comprises 224 residues: 7-cyano-7-deazaguanine synthase (224 aa).

10–20 (LSGGLDSATVV) is a binding site for ATP. Positions 189, 199, 202, and 205 each coordinate Zn(2+).

This sequence belongs to the QueC family. Requires Zn(2+) as cofactor.

It catalyses the reaction 7-carboxy-7-deazaguanine + NH4(+) + ATP = 7-cyano-7-deazaguanine + ADP + phosphate + H2O + H(+). Its pathway is purine metabolism; 7-cyano-7-deazaguanine biosynthesis. Its function is as follows. Catalyzes the ATP-dependent conversion of 7-carboxy-7-deazaguanine (CDG) to 7-cyano-7-deazaguanine (preQ(0)). The chain is 7-cyano-7-deazaguanine synthase from Stutzerimonas stutzeri (strain A1501) (Pseudomonas stutzeri).